We begin with the raw amino-acid sequence, 79 residues long: Cytochrome b (79 aa).

A run of 3 helical transmembrane segments spans residues 1–7 (TALLLAM), 31–52 (WLIR…YLHI), and 67–79 (WNIG…TLMA). 2 residues coordinate heme b: histidine 37 and histidine 51.

This sequence belongs to the cytochrome b family. As to quaternary structure, the cytochrome bc1 complex contains 11 subunits: 3 respiratory subunits (MT-CYB, CYC1 and UQCRFS1), 2 core proteins (UQCRC1 and UQCRC2) and 6 low-molecular weight proteins (UQCRH/QCR6, UQCRB/QCR7, UQCRQ/QCR8, UQCR10/QCR9, UQCR11/QCR10 and a cleavage product of UQCRFS1). This cytochrome bc1 complex then forms a dimer. It depends on heme b as a cofactor.

It is found in the mitochondrion inner membrane. Its function is as follows. Component of the ubiquinol-cytochrome c reductase complex (complex III or cytochrome b-c1 complex) that is part of the mitochondrial respiratory chain. The b-c1 complex mediates electron transfer from ubiquinol to cytochrome c. Contributes to the generation of a proton gradient across the mitochondrial membrane that is then used for ATP synthesis. The chain is Cytochrome b (MT-CYB) from Corcorax melanoramphos (White-winged chough).